The chain runs to 404 residues: Multidrug resistance protein MdtG (404 aa).

11 consecutive transmembrane segments (helical) span residues 19–39 (LGCF…PLYV), 56–76 (LVFS…GGLA), 90–110 (LGMA…QFLI), 113–133 (ALLG…ATQV), 144–164 (TLST…GLLA), 171–191 (PVFF…FFFI), 222–242 (LFVT…ILTL), 254–274 (IAFI…LSAP), 288–308 (ILIV…FVQT), 317–337 (FLLG…LVYN), and 376–396 (AVFC…WNSL).

It belongs to the major facilitator superfamily. DHA1 family. MdtG (TC 2.A.1.2.20) subfamily.

The protein resides in the cell inner membrane. This chain is Multidrug resistance protein MdtG, found in Salmonella agona (strain SL483).